Consider the following 164-residue polypeptide: C-type lectin 1 (164 aa).

A signal peptide spans 1–23 (MGRFLFASLGLLVVAFSLSGTGA). Cystine bridges form between cysteine 27–cysteine 38, cysteine 55–cysteine 154, and cysteine 129–cysteine 146. One can recognise a C-type lectin domain in the interval 34 to 155 (YNVSCYKLFY…CTLLHPFLCQ (122 aa)). Asparagine 35 and asparagine 109 each carry an N-linked (GlcNAc...) asparagine glycan. The Mannose-binding signature appears at 119–121 (EPN). Residues glutamate 127, asparagine 142, and aspartate 143 each coordinate Ca(2+).

Belongs to the true venom lectin family. As to expression, expressed by the venom gland.

The protein resides in the secreted. Its function is as follows. Mannose-binding lectin which recognizes specific carbohydrate structures and agglutinates a variety of animal cells by binding to cell-surface glycoproteins and glycolipids. May be a calcium-dependent lectin. In Hydrophis hardwickii (Hardwick's spine-bellied seasnake), this protein is C-type lectin 1.